Consider the following 103-residue polypeptide: Large ribosomal subunit protein bL21 (103 aa).

This sequence belongs to the bacterial ribosomal protein bL21 family. As to quaternary structure, part of the 50S ribosomal subunit. Contacts protein L20.

Functionally, this protein binds to 23S rRNA in the presence of protein L20. The polypeptide is Large ribosomal subunit protein bL21 (Hamiltonella defensa subsp. Acyrthosiphon pisum (strain 5AT)).